Here is a 250-residue protein sequence, read N- to C-terminus: 2,3-bisphosphoglycerate-dependent phosphoglycerate mutase (250 aa).

Residues 12–19, 25–26, Arg-64, 91–94, Lys-102, 118–119, and 185–186 contribute to the substrate site; these read RHGQSAWN, TG, ERHY, RR, and GN. His-13 functions as the Tele-phosphohistidine intermediate in the catalytic mechanism. Catalysis depends on Glu-91, which acts as the Proton donor/acceptor.

The protein belongs to the phosphoglycerate mutase family. BPG-dependent PGAM subfamily.

The catalysed reaction is (2R)-2-phosphoglycerate = (2R)-3-phosphoglycerate. Its pathway is carbohydrate degradation; glycolysis; pyruvate from D-glyceraldehyde 3-phosphate: step 3/5. Catalyzes the interconversion of 2-phosphoglycerate and 3-phosphoglycerate. The polypeptide is 2,3-bisphosphoglycerate-dependent phosphoglycerate mutase (Corynebacterium efficiens (strain DSM 44549 / YS-314 / AJ 12310 / JCM 11189 / NBRC 100395)).